The primary structure comprises 438 residues: Enolase 1 (438 aa).

Substrate contacts are provided by H160 and E169. The Proton donor role is filled by E212. Positions 247, 296, and 321 each coordinate Mg(2+). The substrate site is built by E296 and D321. The active-site Proton acceptor is K346. Substrate contacts are provided by residues 373-376 (SHRS) and K397.

The protein belongs to the enolase family. In terms of assembly, homodimer. Mg(2+) serves as cofactor.

Its subcellular location is the cytoplasm. It carries out the reaction (2R)-2-phosphoglycerate = phosphoenolpyruvate + H2O. It functions in the pathway carbohydrate degradation; glycolysis; pyruvate from D-glyceraldehyde 3-phosphate: step 4/5. The polypeptide is Enolase 1 (ENO1) (Candida glabrata (strain ATCC 2001 / BCRC 20586 / JCM 3761 / NBRC 0622 / NRRL Y-65 / CBS 138) (Yeast)).